A 425-amino-acid chain; its full sequence is Serine--tRNA ligase (425 aa).

Position 231–233 (231–233 (TAE)) interacts with L-serine. 262–264 (RSE) is a binding site for ATP. E285 provides a ligand contact to L-serine. 349–352 (EISS) contributes to the ATP binding site. Residue S385 participates in L-serine binding.

The protein belongs to the class-II aminoacyl-tRNA synthetase family. Type-1 seryl-tRNA synthetase subfamily. As to quaternary structure, homodimer. The tRNA molecule binds across the dimer.

Its subcellular location is the cytoplasm. The enzyme catalyses tRNA(Ser) + L-serine + ATP = L-seryl-tRNA(Ser) + AMP + diphosphate + H(+). The catalysed reaction is tRNA(Sec) + L-serine + ATP = L-seryl-tRNA(Sec) + AMP + diphosphate + H(+). It participates in aminoacyl-tRNA biosynthesis; selenocysteinyl-tRNA(Sec) biosynthesis; L-seryl-tRNA(Sec) from L-serine and tRNA(Sec): step 1/1. In terms of biological role, catalyzes the attachment of serine to tRNA(Ser). Is also able to aminoacylate tRNA(Sec) with serine, to form the misacylated tRNA L-seryl-tRNA(Sec), which will be further converted into selenocysteinyl-tRNA(Sec). The chain is Serine--tRNA ligase from Maricaulis maris (strain MCS10) (Caulobacter maris).